The primary structure comprises 188 residues: UPF0301 protein XF_2228 (188 aa).

It belongs to the UPF0301 (AlgH) family.

The protein is UPF0301 protein XF_2228 of Xylella fastidiosa (strain 9a5c).